Reading from the N-terminus, the 669-residue chain is PAN2-PAN3 deadenylation complex subunit PAN3 (669 aa).

Residues 1-10 (MATTFGSPSG) are compositionally biased toward polar residues. The disordered stretch occupies residues 1 to 25 (MATTFGSPSGDSRRGVASPRPKGRE). The C3H1-type zinc finger occupies 25 to 54 (EAKNTFCRNVTIYGHCRYENSKCRPPHLPD). A pseudokinase domain region spans residues 247–519 (QVMPNSTLPV…DIDNFLGGIS (273 aa)). Residues arginine 298, 347-354 (DYHPNSKS), and 408-409 (SK) contribute to the ATP site. The stretch at 520-558 (DQLASVFDSELHAQDTLTNTLGRELESSRIVRLLVKLNM) forms a coiled coil. A knob domain region spans residues 559 to 669 (VNERPELDAS…LIRAGRGQGK (111 aa)).

Belongs to the protein kinase superfamily. PAN3 family. As to quaternary structure, homodimer. Forms a heterotrimer with a catalytic subunit PAN2 to form the poly(A)-nuclease (PAN) deadenylation complex. Interacts (via PAM-2 motif) with poly(A)-binding protein PAB1 (via PABC domain), conferring substrate specificity of the enzyme complex.

It localises to the cytoplasm. In terms of biological role, regulatory subunit of the poly(A)-nuclease (PAN) deadenylation complex, one of two cytoplasmic mRNA deadenylases involved in mRNA turnover. PAN specifically shortens poly(A) tails of RNA and the activity is stimulated by poly(A)-binding protein PAB1. PAN deadenylation is followed by rapid degradation of the shortened mRNA tails by the CCR4-NOT complex. Deadenylated mRNAs are then degraded by two alternative mechanisms, namely exosome-mediated 3'-5' exonucleolytic degradation, or deadenylation-dependent mRNA decaping and subsequent 5'-3' exonucleolytic degradation by XRN1. May also be involved in post-transcriptional maturation of mRNA poly(A) tails. PAN3 acts as a positive regulator for PAN activity, recruiting the catalytic subunit PAN2 to mRNA via its interaction with RNA and with PAB1. The sequence is that of PAN2-PAN3 deadenylation complex subunit PAN3 from Phaeosphaeria nodorum (strain SN15 / ATCC MYA-4574 / FGSC 10173) (Glume blotch fungus).